The chain runs to 182 residues: uncharacterized protein (182 aa).

A disordered region spans residues 40–182 (LLKTDDDDDD…EEIQRNQKGN (143 aa)). The span at 52-86 (NNININNNNATITTTSTTTTTTTTSTTKTFTISTD) shows a compositional bias: low complexity. Over residues 87–100 (NYDEDVNDDQDEGD) the composition is skewed to acidic residues. Low complexity-rich tracts occupy residues 104–134 (NNNN…NNNN) and 148–157 (DLDFNNQNNN). A compositionally biased stretch (basic and acidic residues) spans 165–182 (FLSKDDNIEEIQRNQKGN).

This is an uncharacterized protein from Dictyostelium discoideum (Social amoeba).